We begin with the raw amino-acid sequence, 451 residues long: Proline--tRNA ligase (451 aa).

Belongs to the class-II aminoacyl-tRNA synthetase family. ProS type 2 subfamily. In terms of assembly, homodimer.

The protein localises to the cytoplasm. The catalysed reaction is tRNA(Pro) + L-proline + ATP = L-prolyl-tRNA(Pro) + AMP + diphosphate. Catalyzes the attachment of proline to tRNA(Pro) in a two-step reaction: proline is first activated by ATP to form Pro-AMP and then transferred to the acceptor end of tRNA(Pro). The sequence is that of Proline--tRNA ligase from Roseobacter denitrificans (strain ATCC 33942 / OCh 114) (Erythrobacter sp. (strain OCh 114)).